The following is a 261-amino-acid chain: RNA-binding protein 1 (261 aa).

Disordered stretches follow at residues 1-38 (MADG…SGNE) and 232-261 (QFSR…RGRR). In terms of domain architecture, RRM spans 151–236 (PTLYIEGLPS…SHLRLQFSRY (86 aa)). Residues 240–254 (RSGGGPRSSGPPRGG) are compositionally biased toward gly residues.

Ubiquitous.

It is found in the nucleus speckle. Its subcellular location is the cytoplasmic granule. Its function is as follows. RNA-binding protein interacting with the enod40 RNA. The sequence is that of RNA-binding protein 1 from Medicago truncatula (Barrel medic).